Here is a 397-residue protein sequence, read N- to C-terminus: Enoyl-[acyl-carrier-protein] reductase [NADH] (397 aa).

Residues Gly-48–Tyr-53, Phe-74–Glu-75, Asp-111–Ala-112, and Val-139–Ala-140 each bind NAD(+). Tyr-225 contributes to the substrate binding site. Tyr-235 (proton donor) is an active-site residue. NAD(+)-binding positions include Lys-244 and Val-273–Thr-275.

Belongs to the TER reductase family. Monomer.

The enzyme catalyses a 2,3-saturated acyl-[ACP] + NAD(+) = a (2E)-enoyl-[ACP] + NADH + H(+). It participates in lipid metabolism; fatty acid biosynthesis. Functionally, involved in the final reduction of the elongation cycle of fatty acid synthesis (FAS II). Catalyzes the reduction of a carbon-carbon double bond in an enoyl moiety that is covalently linked to an acyl carrier protein (ACP). In Burkholderia thailandensis (strain ATCC 700388 / DSM 13276 / CCUG 48851 / CIP 106301 / E264), this protein is Enoyl-[acyl-carrier-protein] reductase [NADH].